Consider the following 99-residue polypeptide: Protein Tat (99 aa).

The interaction with human CREBBP stretch occupies residues 1–24 (MEVVDPKIDPWNHPGSQPETPCNN). Positions 1-48 (MEVVDPKIDPWNHPGSQPETPCNNCYCKKCCFHCPLCFMKKGLGISYG) are transactivation. Zn(2+)-binding residues include C22, C25, and C27. Residues 22 to 37 (CNNCYCKKCCFHCPLC) form a cysteine-rich region. K28 carries the N6-acetyllysine; by host PCAF modification. The Zn(2+) site is built by C30, H33, C34, and C37. Residues 38-48 (FMKKGLGISYG) are core. The segment at 47–99 (YGRKKRRQRRRTPQGSKIHQDPVPKQPLSQTRGDPTGPEESKKKVESQTETDP) is disordered. Over residues 48–58 (GRKKRRQRRRT) the composition is skewed to basic residues. Residues 49 to 57 (RKKRRQRRR) carry the Nuclear localization signal, RNA-binding (TAR), and protein transduction motif. The interval 49–86 (RKKRRQRRRTPQGSKIHQDPVPKQPLSQTRGDPTGPEE) is interaction with the host capping enzyme RNGTT. N6-acetyllysine; by host EP300 and GCN5L2 occurs at positions 50 and 51. An asymmetric dimethylarginine; by host PRMT6 mark is found at R52 and R53. K71 participates in a covalent cross-link: Glycyl lysine isopeptide (Lys-Gly) (interchain with G-Cter in ubiquitin). A Cell attachment site motif is present at residues 78 to 80 (RGD).

This sequence belongs to the lentiviruses Tat family. As to quaternary structure, interacts with host CCNT1. Associates with the P-TEFb complex composed at least of Tat, P-TEFb (CDK9 and CCNT1), TAR RNA, RNA Pol II. Recruits the HATs CREBBP, TAF1/TFIID, EP300, PCAF and GCN5L2. Interacts with host KAT5/Tip60; this interaction targets the latter to degradation. Interacts with the host deacetylase SIRT1. Interacts with host capping enzyme RNGTT; this interaction stimulates RNGTT. Binds to host KDR, and to the host integrins ITGAV/ITGB3 and ITGA5/ITGB1. Interacts with host KPNB1/importin beta-1 without previous binding to KPNA1/importin alpha-1. Interacts with EIF2AK2. Interacts with host nucleosome assembly protein NAP1L1; this interaction may be required for the transport of Tat within the nucleus, since the two proteins interact at the nuclear rim. Interacts with host C1QBP/SF2P32; this interaction involves lysine-acetylated Tat. Interacts with the host chemokine receptors CCR2, CCR3 and CXCR4. Interacts with host DPP4/CD26; this interaction may trigger an anti-proliferative effect. Interacts with host LDLR. Interacts with the host extracellular matrix metalloproteinase MMP1. Interacts with host PRMT6; this interaction mediates Tat's methylation. Interacts with, and is ubiquitinated by MDM2/Hdm2. Interacts with host PSMC3 and HTATIP2. Interacts with STAB1; this interaction may overcome SATB1-mediated repression of IL2 and IL2RA (interleukin) in T cells by binding to the same domain than HDAC1. Interacts (when acetylated) with human CDK13, thereby increasing HIV-1 mRNA splicing and promoting the production of the doubly spliced HIV-1 protein Nef. Interacts with host TBP; this interaction modulates the activity of transcriptional pre-initiation complex. Interacts with host RELA. Interacts with host PLSCR1; this interaction negatively regulates Tat transactivation activity by altering its subcellular distribution. In terms of processing, asymmetrical arginine methylation by host PRMT6 seems to diminish the transactivation capacity of Tat and affects the interaction with host CCNT1. Post-translationally, acetylation by EP300, CREBBP, GCN5L2/GCN5 and PCAF regulates the transactivation activity of Tat. EP300-mediated acetylation of Lys-50 promotes dissociation of Tat from the TAR RNA through the competitive binding to PCAF's bromodomain. In addition, the non-acetylated Tat's N-terminus can also interact with PCAF. PCAF-mediated acetylation of Lys-28 enhances Tat's binding to CCNT1. Lys-50 is deacetylated by SIRT1. Polyubiquitination by host MDM2 does not target Tat to degradation, but activates its transactivation function and fosters interaction with CCNT1 and TAR RNA. In terms of processing, phosphorylated by EIF2AK2 on serine and threonine residues adjacent to the basic region important for TAR RNA binding and function. Phosphorylation of Tat by EIF2AK2 is dependent on the prior activation of EIF2AK2 by dsRNA.

The protein resides in the host nucleus. It is found in the host nucleolus. It localises to the host cytoplasm. Its subcellular location is the secreted. Transcriptional activator that increases RNA Pol II processivity, thereby increasing the level of full-length viral transcripts. Recognizes a hairpin structure at the 5'-LTR of the nascent viral mRNAs referred to as the transactivation responsive RNA element (TAR) and recruits the cyclin T1-CDK9 complex (P-TEFb complex) that will in turn hyperphosphorylate the RNA polymerase II to allow efficient elongation. The CDK9 component of P-TEFb and other Tat-activated kinases hyperphosphorylate the C-terminus of RNA Pol II that becomes stabilized and much more processive. Other factors such as HTATSF1/Tat-SF1, SUPT5H/SPT5, and HTATIP2 are also important for Tat's function. Besides its effect on RNA Pol II processivity, Tat induces chromatin remodeling of proviral genes by recruiting the histone acetyltransferases (HATs) CREBBP, EP300 and PCAF to the chromatin. This also contributes to the increase in proviral transcription rate, especially when the provirus integrates in transcriptionally silent region of the host genome. To ensure maximal activation of the LTR, Tat mediates nuclear translocation of NF-kappa-B by interacting with host RELA. Through its interaction with host TBP, Tat may also modulate transcription initiation. Tat can reactivate a latently infected cell by penetrating in it and transactivating its LTR promoter. In the cytoplasm, Tat is thought to act as a translational activator of HIV-1 mRNAs. In terms of biological role, extracellular circulating Tat can be endocytosed by surrounding uninfected cells via the binding to several surface receptors such as CD26, CXCR4, heparan sulfate proteoglycans (HSPG) or LDLR. Neurons are rarely infected, but they internalize Tat via their LDLR. Through its interaction with nuclear HATs, Tat is potentially able to control the acetylation-dependent cellular gene expression. Modulates the expression of many cellular genes involved in cell survival, proliferation or in coding for cytokines or cytokine receptors. Tat plays a role in T-cell and neurons apoptosis. Tat induced neurotoxicity and apoptosis probably contribute to neuroAIDS. Circulating Tat also acts as a chemokine-like and/or growth factor-like molecule that binds to specific receptors on the surface of the cells, affecting many cellular pathways. In the vascular system, Tat binds to ITGAV/ITGB3 and ITGA5/ITGB1 integrins dimers at the surface of endothelial cells and competes with bFGF for heparin-binding sites, leading to an excess of soluble bFGF. This is Protein Tat from Homo sapiens (Human).